Here is a 37-residue protein sequence, read N- to C-terminus: Dolichyl-diphosphooligosaccharide--protein glycosyltransferase subunit 4A (37 aa).

Topologically, residues 1–7 are lumenal; the sequence is MIDDQDL. Residues 8-28 form a helical membrane-spanning segment; sequence GFIANFLGIFIFALVIAYHYV. At 29–37 the chain is on the cytoplasmic side; it reads TADPKYEAT.

This sequence belongs to the OST4 family. As to quaternary structure, component of the oligosaccharyltransferase (OST) complex.

It is found in the endoplasmic reticulum membrane. Functionally, subunit of the oligosaccharyl transferase (OST) complex that catalyzes the initial transfer of a defined glycan (Glc(3)Man(9)GlcNAc(2) in eukaryotes) from the lipid carrier dolichol-pyrophosphate to an asparagine residue within an Asn-X-Ser/Thr consensus motif in nascent polypeptide chains, the first step in protein N-glycosylation. N-glycosylation occurs cotranslationally and the complex associates with the Sec61 complex at the channel-forming translocon complex that mediates protein translocation across the endoplasmic reticulum (ER). All subunits are required for a maximal enzyme activity. The polypeptide is Dolichyl-diphosphooligosaccharide--protein glycosyltransferase subunit 4A (OST4A) (Arabidopsis thaliana (Mouse-ear cress)).